Consider the following 203-residue polypeptide: Phosphatidylglycerophosphatase B (203 aa).

Residue Met-1 is a topological domain, cytoplasmic. The helical transmembrane segment at 2-17 (YKPVSLFLFFLILAAA) threads the bilayer. At 18-55 (IHTNAVQSADEAISKAAVLIRQPWLNEVMTGITHLGAS) the chain is on the extracellular side. The helical transmembrane segment at 56-74 (SFLLPLIVIIGAGMFFYRK) threads the bilayer. Topologically, residues 75 to 78 (TWDG) are cytoplasmic. Residues 79 to 99 (LLMLLVFGTDRLLNKVLKEWI) form a helical membrane-spanning segment. The segment at 96-104 (KEWIERVRP) is phosphatase sequence motif I. Over 100–119 (ERVRPDFAPLVHESSFSFPS) the chain is Extracellular. The interval 118-121 (PSGH) is phosphatase sequence motif II. A helical membrane pass occupies residues 120 to 139 (GHSMNAACVYPVIAYFLVKH). The active-site Proton donors is His-121. The Cytoplasmic segment spans residues 140-146 (LPFLSKH). Residues 147 to 167 (KKMVYIIAGVIAVLVGISRVY) form a helical membrane-spanning segment. The interval 164–175 (SRVYLGVHFVTD) is phosphatase sequence motif III. Residues 168-172 (LGVHF) are Extracellular-facing. Residue His-171 is the Nucleophile of the active site. A helical membrane pass occupies residues 173–196 (VTDVLGGFSLGLLLFFLVKGFDEK). Residues 197-203 (IKRFRQK) are Cytoplasmic-facing.

This sequence belongs to the PA-phosphatase related phosphoesterase family.

It localises to the cell membrane. It carries out the reaction a 1,2-diacyl-sn-glycero-3-phospho-(1'-sn-glycero-3'-phosphate) + H2O = a 1,2-diacyl-sn-glycero-3-phospho-(1'-sn-glycerol) + phosphate. Catalyzes the dephosphorylation of phosphatidylglycerophosphate (PGP) to phosphatidylglycerol. Also has undecaprenyl pyrophosphate phosphatase activity, required for the biosynthesis of the lipid carrier undecaprenyl phosphate. The protein is Phosphatidylglycerophosphatase B of Bacillus subtilis (strain 168).